Consider the following 343-residue polypeptide: Transcription factor BPE (343 aa).

Residues 142–192 form the bHLH domain; that stretch reads QATDSHSLAERARREKISERMKILQDLVPGCNKVIGKALVLDEIINYIQSL.

In terms of assembly, homodimer. In terms of tissue distribution, specifically expressed in flowers, mostly in petals, inflorescence and flower buds. As to expression, expressed ubiquitously (leaves, flowers and stems).

The protein localises to the nucleus. Involved in the control of petal size, by interfering with postmitotic cell expansion to limit final petal cell size. This Arabidopsis thaliana (Mouse-ear cress) protein is Transcription factor BPE (BPE).